A 91-amino-acid chain; its full sequence is Probable Fe(2+)-trafficking protein (91 aa).

It belongs to the Fe(2+)-trafficking protein family.

Could be a mediator in iron transactions between iron acquisition and iron-requiring processes, such as synthesis and/or repair of Fe-S clusters in biosynthetic enzymes. This is Probable Fe(2+)-trafficking protein from Shewanella denitrificans (strain OS217 / ATCC BAA-1090 / DSM 15013).